The primary structure comprises 1147 residues: Putative ATP-dependent RNA helicase L377 (1147 aa).

Residues 108 to 315 (INPNTPYRGL…VELINYLRPK (208 aa)) form the Helicase ATP-binding domain. 121-128 (WGTGVGKS) contributes to the ATP binding site. Residues 264 to 267 (DEAH) carry the DEAH box motif.

The protein belongs to the DEAD box helicase family. DEAH subfamily.

The protein resides in the virion. The enzyme catalyses ATP + H2O = ADP + phosphate + H(+). The sequence is that of Putative ATP-dependent RNA helicase L377 from Acanthamoeba polyphaga (Amoeba).